We begin with the raw amino-acid sequence, 315 residues long: Probable diguanylate cyclase DgcF (315 aa).

A run of 4 helical transmembrane segments spans residues Phe10–Pro30, Ile41–Phe61, Leu80–Ile100, and Leu116–Asn136. The GGDEF domain maps to Gln173–Tyr310. Asp181 and Ile182 together coordinate Mg(2+). Asn189, His194, and Asp198 together coordinate substrate. Position 224 (Glu224) interacts with Mg(2+).

In terms of assembly, homodimer. Requires Mg(2+) as cofactor.

The protein resides in the cell membrane. The enzyme catalyses 2 GTP = 3',3'-c-di-GMP + 2 diphosphate. Its pathway is purine metabolism; 3',5'-cyclic di-GMP biosynthesis. In terms of biological role, catalyzes the synthesis of cyclic-di-GMP (c-di-GMP) via the condensation of 2 GTP molecules. The chain is Probable diguanylate cyclase DgcF from Escherichia coli (strain K12).